The primary structure comprises 140 residues: Putative transcription elongation factor S-II-like protein 349L (140 aa).

The TFIIS-type zinc-finger motif lies at 100–139 (GAIKCKCGSERVFSFSKQTRSGDESTSVFALCSSCKSKWV). Residues C104, C106, C131, and C134 each coordinate Zn(2+).

This sequence belongs to the IIV-6 349L family.

The protein is Putative transcription elongation factor S-II-like protein 349L of Acheta domesticus (House cricket).